The sequence spans 186 residues: MDPNNQIQAPVENYANPRTCLFHVLFKGAALAFYILSALFFNSFVIIFVVTVLLAALDFWVVKNVSGRILVGLRWWNEINDLGESVWKFESLDQESLARMNKKDSWLFWWTLYLAAAAWFILGVFSLIRFQADYLLVVGVCLSLNVANIIGFTKCKKDAKKQFQQFASQTIASRFQSTVQSAFTLV.

Methionine 1 carries the N-acetylmethionine modification. The next 3 helical transmembrane spans lie at 35 to 55 (ILSA…VLLA), 108 to 128 (FWWT…FSLI), and 132 to 152 (ADYL…IIGF).

It belongs to the TVP23 family. Component of a trans-Golgi network (TGN)-localized ECH/YIP4 complex made of ECH, YIP4A and YIP4B. Interacts directly with YIP4A and YIP4B.

It localises to the golgi apparatus. It is found in the trans-Golgi network membrane. The protein resides in the early endosome membrane. In terms of biological role, mediates trans-Golgi-network trafficking and cell elongation. Required for keeping the appropriate balance between secretory trafficking and vacuolar targeting of a subset of proteins. The ECH/YIP4 complex is involved in the modulation of the trans-Golgi network (TGN)-mediated trafficking of some proteins and cell wall components (e.g. pectin and hemicellulose) to the cell wall in dark-grown hypocotyls and in secretory cells of the seed coat. This Arabidopsis thaliana (Mouse-ear cress) protein is Golgi apparatus membrane protein-like protein ECHIDNA.